A 686-amino-acid polypeptide reads, in one-letter code: Putative xyloglucan glycosyltransferase 10 (686 aa).

A run of 2 helical transmembrane segments spans residues 114 to 134 and 160 to 180; these read LYAF…VELA and AAYV…LFLV. Residue D267 is part of the active site. Substrate contacts are provided by D326 and D328. D420 is an active-site residue. Helical transmembrane passes span 498 to 518, 523 to 543, 640 to 656, and 661 to 681; these read LILP…TMFI, LPDW…ILPA, ELAL…RSLL, and IHFY…LDLI.

Belongs to the glycosyltransferase 2 family. Plant cellulose synthase-like C subfamily.

Its subcellular location is the golgi apparatus membrane. Probable beta-1,4-glucan synthase rather involved in the synthesis of the xyloglucan backbone than cellulose. Seems to work simultaneously with xyloglucan 6-xylosyltransferase. Xyloglucan is a noncellulosic polysaccharides of plant cell wall and consists of a glucan backbone substituted by xylose, galactose and fucose. In Oryza sativa subsp. indica (Rice), this protein is Putative xyloglucan glycosyltransferase 10 (CSLC10).